A 194-amino-acid chain; its full sequence is Prefoldin subunit 3 (194 aa).

The protein belongs to the prefoldin subunit alpha family. Heterohexamer of two PFD-alpha type and four PFD-beta type subunits. Interacts with itself. Interacts with Vhl and betaTub56D/tubulin beta-1 chain. Interacts with tubulin alpha-beta heterodimers by itself or in complex with Vhl. Does not interact with microtubules (MTs). As to expression, expressed in larval central nervous system (CNS) and pupal testis (at protein level).

It is found in the cytoplasm. In terms of biological role, binds specifically to cytosolic chaperonin (c-CPN) and transfers target proteins to it. Binds to nascent polypeptide chain and promotes folding in an environment in which there are many competing pathways for nonnative proteins. Required for tubulin stability and spindle and centrosome formation in cooperation with Vhl. In Drosophila melanogaster (Fruit fly), this protein is Prefoldin subunit 3 (mgr).